A 102-amino-acid polypeptide reads, in one-letter code: Small ribosomal subunit protein uS10 (102 aa).

It belongs to the universal ribosomal protein uS10 family. In terms of assembly, part of the 30S ribosomal subunit.

Involved in the binding of tRNA to the ribosomes. This is Small ribosomal subunit protein uS10 from Syntrophus aciditrophicus (strain SB).